The chain runs to 297 residues: UBX domain-containing protein 1 (297 aa).

A2 is subject to N-acetylalanine. Residues A2 to H42 form the UBA domain. The disordered stretch occupies residues W38–D212. Positions H42–L52 are enriched in acidic residues. Residues E43–S297 are interaction with BRCA1. Composition is skewed to basic and acidic residues over residues L86–K122 and K137–Q177. The stretch at L86 to K172 forms a coiled coil. S199 bears the Phosphoserine mark. Phosphoserine; by MAPK12 is present on S200. A phosphothreonine mark is found at T207 and T229. In terms of domain architecture, UBX spans R209–V291. The residue at position 270 (S270) is a Phosphoserine.

Component of a complex required to couple retrotranslocation, ubiquitination and deglycosylation composed of NGLY1, SAKS1, AMFR, VCP and RAD23B. Interacts with HOMER2. Interacts directly with VCP. Interacts with BRCA1 and BARD1; interaction takes place when BRCA1 is not autoubiquitinated bur is strongly enhanced in the presence of autoubiquitinated BRCA1.

It localises to the cytoplasm. In terms of biological role, ubiquitin-binding protein that interacts with the BRCA1-BARD1 heterodimer, and regulates its activity. Specifically binds 'Lys-6'-linked polyubiquitin chains. Interaction with autoubiquitinated BRCA1, leads to inhibit the E3 ubiquitin-protein ligase activity of the BRCA1-BARD1 heterodimer. Component of a complex required to couple deglycosylation and proteasome-mediated degradation of misfolded proteins in the endoplasmic reticulum that are retrotranslocated in the cytosol. The chain is UBX domain-containing protein 1 (Ubxn1) from Rattus norvegicus (Rat).